We begin with the raw amino-acid sequence, 149 residues long: Glycophorin-A (149 aa).

The signal sequence occupies residues 1-19 (MYGKIIFVLLLSAIVSISA). The Extracellular portion of the chain corresponds to 20-90 (SSTTEVAMHT…QLVHRFSEPE (71 aa)). S21 carries O-linked (GalNAc...) serine glycosylation. 3 O-linked (GalNAc...) threonine glycosylation sites follow: T22, T23, and T29. A glycan (O-linked (GalNAc...) serine) is linked at S30. O-linked (GalNAc...) threonine glycosylation occurs at T31. An O-linked (GalNAc...) serine glycan is attached at S32. Residue T35 is glycosylated (O-linked (GalNAc...) threonine). O-linked (GalNAc...) serine glycans are attached at residues S37 and S40. A glycan (O-linked (GalNAc...) threonine) is linked at T43. An O-linked (GalNAc...) serine glycan is attached at S44. O-linked (GalNAc...) threonine glycosylation is found at T51 and T55. S62 is a glycosylation site (O-linked (GalNAc...) serine). O-linked (GalNAc...) threonine glycosylation occurs at T68. The helical transmembrane segment at 91 to 113 (ITLIIFGVMAGVIGTILLIYYSI) threads the bilayer. At 114-149 (RRLIKKSPSDVKPLPSPDTDVPLSSVEIENPETSDQ) the chain is on the cytoplasmic side. The disordered stretch occupies residues 122 to 149 (SDVKPLPSPDTDVPLSSVEIENPETSDQ). Residues S137 and S147 each carry the phosphoserine modification.

It belongs to the glycophorin-A family. Homodimer. Component of the ankyrin-1 complex in the erythrocyte, composed of ANK1, RHCE, RHAG, SLC4A1, EPB42, GYPA, GYPB and AQP1. Interacts with SLC4A1; a GYPA monomer is bound at each end of the SLC4A1 dimer forming a heterotetramer.

Its subcellular location is the cell membrane. In terms of biological role, component of the ankyrin-1 complex, a multiprotein complex involved in the stability and shape of the erythrocyte membrane. Glycophorin A is the major intrinsic membrane protein of the erythrocyte. The N-terminal glycosylated segment, which lies outside the erythrocyte membrane, has MN blood group receptors. Appears to be important for the function of SLC4A1 and is required for high activity of SLC4A1. May be involved in translocation of SLC4A1 to the plasma membrane. The polypeptide is Glycophorin-A (Pan troglodytes (Chimpanzee)).